Consider the following 298-residue polypeptide: Protease HtpX homolog (298 aa).

2 helical membrane passes run 16–36 (VMFG…YLFW) and 38–58 (SWVS…LIMI). His-144 is a binding site for Zn(2+). Residue Glu-145 is part of the active site. His-148 is a binding site for Zn(2+). 2 helical membrane passes run 159-179 (IALA…NWFW) and 197-217 (IIGL…ASIA). Residue Glu-226 coordinates Zn(2+).

The protein belongs to the peptidase M48B family. Zn(2+) is required as a cofactor.

The protein localises to the cell membrane. This Levilactobacillus brevis (strain ATCC 367 / BCRC 12310 / CIP 105137 / JCM 1170 / LMG 11437 / NCIMB 947 / NCTC 947) (Lactobacillus brevis) protein is Protease HtpX homolog.